The primary structure comprises 168 residues: Small ribosomal subunit protein uS5c (168 aa).

The S5 DRBM domain occupies 17–80 (WQERVVQIRR…SDGKKKIVSV (64 aa)).

The protein belongs to the universal ribosomal protein uS5 family. Part of the 30S ribosomal subunit. Contacts protein S4.

The protein resides in the plastid. Its subcellular location is the chloroplast. In terms of biological role, with S4 and S12 plays an important role in translational accuracy. The protein is Small ribosomal subunit protein uS5c (rps5) of Rhodomonas salina (Cryptomonas salina).